Consider the following 226-residue polypeptide: MASLCLSSSRIVSLHHQKPFLALKLRPRPSNISGLGHSTSVVCFNPLRLSADRQRTATVSARAEKRRKRGSSVVCYATPMLSVHNLQWISTISCVALMFARGTGIHKSFVVPLFALQAPMGIVSWMKGEYGIWAAFLALLTRLFFSFPVELELPFIALLLVIVAPYQVMSIRGKQEGAILSLAISCFLAFQHFSRAGTLQKAFDQNSVLATVAIIGVTVVSFLFLI.

A chloroplast-targeting transit peptide spans 1 to 76 (MASLCLSSSR…RKRGSSVVCY (76 aa)). Residues 77–79 (ATP) lie on the Stromal side of the membrane. A helical transmembrane segment spans residues 80–100 (MLSVHNLQWISTISCVALMFA). Topologically, residues 101–103 (RGT) are chloroplast intermembrane. The chain crosses the membrane as a helical span at residues 104 to 124 (GIHKSFVVPLFALQAPMGIVS). The Stromal portion of the chain corresponds to 125-129 (WMKGE). Residues 130–150 (YGIWAAFLALLTRLFFSFPVE) traverse the membrane as a helical segment. Residues 151 to 152 (LE) lie on the Chloroplast intermembrane side of the membrane. Residues 153–173 (LPFIALLLVIVAPYQVMSIRG) traverse the membrane as a helical segment. Topologically, residues 174 to 176 (KQE) are stromal. A helical membrane pass occupies residues 177-197 (GAILSLAISCFLAFQHFSRAG). Topologically, residues 198–205 (TLQKAFDQ) are chloroplast intermembrane. A helical membrane pass occupies residues 206 to 226 (NSVLATVAIIGVTVVSFLFLI).

The protein belongs to the Cold-regulated 413 protein family.

The protein localises to the plastid. It is found in the chloroplast inner membrane. This Arabidopsis thaliana (Mouse-ear cress) protein is Cold-regulated 413 inner membrane protein 2, chloroplastic (COR413IM2).